Reading from the N-terminus, the 358-residue chain is Putative zinc metalloprotease RC0203 (358 aa).

H18 is a Zn(2+) binding site. E19 is an active-site residue. H22 is a binding site for Zn(2+). Helical transmembrane passes span 52–71, 97–119, 285–307, and 332–351; these read GVRW…IYGY, FLIV…AGFY, YLLF…IPVL, and ILLQ…AVSN. The PDZ domain maps to 102-186; the sequence is AGPLINYLLA…STLTIERKSE (85 aa).

Belongs to the peptidase M50B family. The cofactor is Zn(2+).

It localises to the cell inner membrane. This chain is Putative zinc metalloprotease RC0203, found in Rickettsia conorii (strain ATCC VR-613 / Malish 7).